Consider the following 190-residue polypeptide: Lipid A acyltransferase PagP (190 aa).

The N-terminal stretch at 1–18 (MKRLISCLTIICALNASA) is a signal peptide. Catalysis depends on residues H60, D103, and S104.

The protein belongs to the lipid A palmitoyltransferase family. As to quaternary structure, homodimer.

Its subcellular location is the cell outer membrane. It carries out the reaction a lipid A + a 1,2-diacyl-sn-glycero-3-phosphocholine = a hepta-acyl lipid A + a 2-acyl-sn-glycero-3-phosphocholine. It catalyses the reaction a lipid IVA + a 1,2-diacyl-sn-glycero-3-phosphocholine = a lipid IVB + a 2-acyl-sn-glycero-3-phosphocholine. The enzyme catalyses a lipid IIA + a 1,2-diacyl-sn-glycero-3-phosphocholine = a lipid IIB + a 2-acyl-sn-glycero-3-phosphocholine. Transfers a fatty acid residue from the sn-1 position of a phospholipid to the N-linked hydroxyfatty acid chain on the proximal unit of lipid A or its precursors. The chain is Lipid A acyltransferase PagP from Legionella pneumophila (strain Paris).